A 188-amino-acid chain; its full sequence is ATP synthase subunit p18, mitochondrial (188 aa).

The transit peptide at 1–18 (MMRRVYSPVFCSVAAARF) directs the protein to the mitochondrion. PPR repeat units follow at residues 36–70 (TNTA…PPDI), 75–109 (ATLQ…EMQH), and 116–146 (NEES…METE).

F-type ATPases have 2 components, F(1) - the catalytic core - and F(o) - the membrane proton channel. F(1) has five subunits: alpha(3), beta(3), gamma(1), delta(1), epsilon(1), plus the additional subunit P18 (Tb427.05.1710) that is not present in F(1)F(o) ATP synthase from metazoa. Subunit P18 (Tb927.5.1710) interacts with the alpha subunit with a 1:1 stoichiometry; the interaction is direct. Subunit gamma is part of the central stalk. F(o) has three main subunits: a, b and c. The trypanosomal ATPase complex contains additional subunits that are not present in the F(1)F(o) ATP synthase from metazoa.

It is found in the mitochondrion. The protein resides in the mitochondrion inner membrane. Mitochondrial membrane ATP synthase (F(1)F(o) ATP synthase) produces ATP from ADP in the presence of a proton gradient across the membrane which is generated by electron transport complexes of the respiratory chain. F-type ATPases consist of two structural domains, F(1) - containing the extramembraneous catalytic core, and F(o) - containing the membrane proton channel, linked together by a central stalk and a peripheral stalk. During catalysis, ATP synthesis in the catalytic domain of F(1) is coupled via a rotary mechanism of the central stalk subunits to proton translocation. Subunits alpha and beta form the catalytic core in F(1). Rotation of the central stalk against the surrounding alpha(3)beta(3) subunits leads to hydrolysis of ATP in three separate catalytic sites on the beta subunits. Contrary to the procyclic, insect form that requires F(1)F(o) ATP synthase for ATP synthesis, the bloodstream form relies on ATP hydrolysis by F(1)F(o) ATP synthase to maintain its mitochondrial membrane potential. This Trypanosoma brucei brucei protein is ATP synthase subunit p18, mitochondrial.